Consider the following 412-residue polypeptide: Yellow-related salivary protein LJM17 (412 aa).

Positions 1–18 are cleaved as a signal peptide; that stretch reads MRFFFVFLAIVLFQGIHG. An N-linked (GlcNAc...) asparagine glycan is attached at Asn29.

Belongs to the major royal jelly protein family. As to expression, salivary gland.

The protein localises to the secreted. Functionally, probably modulates blood feeding of sand flies on vertebrate species by binding and sequestering different mediators involved in the host response. Binds biogenic amines. Binds serotonin with high affinity. Binds noradrenaline but not adrenaline. Binds dopamine and octopamine. Binds histamine. Inhibits host smooth muscle contraction induced by histamine in bioassay with guinea pig ileum. Immunogenic; elicits antibody production in the host. Functions as a chemoattractant for host neutrophils; likely acts through a G-protein-coupled receptor and effect is dependent on calcium influx. This is Yellow-related salivary protein LJM17 from Lutzomyia longipalpis (Sand fly).